Reading from the N-terminus, the 638-residue chain is Chaperone protein HtpG (638 aa).

The segment at 1-344 (MQKKETLEFQ…SNDLPLNVSR (344 aa)) is a; substrate-binding. Residues 345-560 (EILQNNENIY…ENDITTQMSK (216 aa)) are b. Residues 561-638 (LLISTGQESP…LLLSNIIRLN (78 aa)) form a c region.

This sequence belongs to the heat shock protein 90 family. As to quaternary structure, homodimer.

The protein localises to the cytoplasm. Molecular chaperone. Has ATPase activity. The sequence is that of Chaperone protein HtpG from Wigglesworthia glossinidia brevipalpis.